Consider the following 335-residue polypeptide: N-acetyl-gamma-glutamyl-phosphate reductase (335 aa).

Cysteine 147 is an active-site residue.

It belongs to the NAGSA dehydrogenase family. Type 1 subfamily.

The protein resides in the cytoplasm. It catalyses the reaction N-acetyl-L-glutamate 5-semialdehyde + phosphate + NADP(+) = N-acetyl-L-glutamyl 5-phosphate + NADPH + H(+). Its pathway is amino-acid biosynthesis; L-arginine biosynthesis; N(2)-acetyl-L-ornithine from L-glutamate: step 3/4. Catalyzes the NADPH-dependent reduction of N-acetyl-5-glutamyl phosphate to yield N-acetyl-L-glutamate 5-semialdehyde. The chain is N-acetyl-gamma-glutamyl-phosphate reductase from Campylobacter hominis (strain ATCC BAA-381 / DSM 21671 / CCUG 45161 / LMG 19568 / NCTC 13146 / CH001A).